The chain runs to 769 residues: Serine protease HtrA-like (769 aa).

Over residues Met-1–Glu-20 the composition is skewed to basic residues. Disordered stretches follow at residues Met-1–Asn-287 and Glu-324–Ala-390. 2 stretches are compositionally biased toward basic and acidic residues: residues Phe-21 to Lys-64 and Leu-71 to Lys-108. Positions Tyr-126–Lys-137 are enriched in polar residues. Basic and acidic residues predominate over residues Ser-138 to Ser-186. The segment covering Gln-247–Ser-262 has biased composition (polar residues). Residues Gln-264–Asn-287 are compositionally biased toward basic and acidic residues. The segment covering Ala-331 to His-347 has biased composition (polar residues). Positions Arg-348–Asn-364 are enriched in basic and acidic residues. The segment covering Gly-365–Ala-390 has biased composition (polar residues). Residues Leu-410 to Val-430 form a helical membrane-spanning segment. Catalysis depends on charge relay system residues His-504, Asp-534, and Ser-619. Residues Ile-680–Asp-733 form the PDZ domain.

This sequence belongs to the peptidase S1C family.

The protein resides in the cell membrane. This is Serine protease HtrA-like from Staphylococcus aureus (strain N315).